A 451-amino-acid chain; its full sequence is Sensor histidine kinase CssS (451 aa).

The Cytoplasmic segment spans residues 1–9 (MKNKPLAFQ). A helical membrane pass occupies residues 10–30 (IWVVISGILLAISILLLVLFS). The Extracellular segment spans residues 31–165 (NTLRDFFTNE…RDDLAYTLFK (135 aa)). Residues 166–186 (QLLFIIAVVILLSWIPAIWLA) form a helical membrane-spanning segment. Positions 187 to 239 (KYLSRPLVSFEKHVKRISEQDWDDPVKVDRKDEIGKLGHTIEEMRQKLVQKDE) constitute an HAMP domain. The Cytoplasmic portion of the chain corresponds to 187-451 (KYLSRPLVSF…GVTYRIAVPK (265 aa)). The 205-residue stretch at 247–451 (NISHDLKTPV…GVTYRIAVPK (205 aa)) folds into the Histidine kinase domain. His250 bears the Phosphohistidine; by autocatalysis mark.

Its subcellular location is the cell membrane. The catalysed reaction is ATP + protein L-histidine = ADP + protein N-phospho-L-histidine.. Its function is as follows. Member of the two-component regulatory system CssS/CssR required to control the cellular response to secretion stress. Required for the transcription of htrA. Could detect misfolded proteins at the membrane-cell wall interface and then activate CssR by phosphorylation. In Bacillus subtilis (strain 168), this protein is Sensor histidine kinase CssS (cssS).